We begin with the raw amino-acid sequence, 281 residues long: Putative pyruvate, phosphate dikinase regulatory protein (281 aa).

Residue 150 to 157 coordinates ADP; the sequence is GVSRTSKT.

Belongs to the pyruvate, phosphate/water dikinase regulatory protein family. PDRP subfamily.

It catalyses the reaction N(tele)-phospho-L-histidyl/L-threonyl-[pyruvate, phosphate dikinase] + ADP = N(tele)-phospho-L-histidyl/O-phospho-L-threonyl-[pyruvate, phosphate dikinase] + AMP + H(+). The catalysed reaction is N(tele)-phospho-L-histidyl/O-phospho-L-threonyl-[pyruvate, phosphate dikinase] + phosphate + H(+) = N(tele)-phospho-L-histidyl/L-threonyl-[pyruvate, phosphate dikinase] + diphosphate. In terms of biological role, bifunctional serine/threonine kinase and phosphorylase involved in the regulation of the pyruvate, phosphate dikinase (PPDK) by catalyzing its phosphorylation/dephosphorylation. The polypeptide is Putative pyruvate, phosphate dikinase regulatory protein (Sorangium cellulosum (strain So ce56) (Polyangium cellulosum (strain So ce56))).